The chain runs to 388 residues: Bifunctional enzyme IspD/IspF (388 aa).

Residues 1-228 (MRIAALLLAA…GVIDRNLLPR (228 aa)) are 2-C-methyl-D-erythritol 4-phosphate cytidylyltransferase. The tract at residues 228-388 (RVGLGYDVHA…SIMVPDNGEA (161 aa)) is 2-C-methyl-D-erythritol 2,4-cyclodiphosphate synthase. Positions 234 and 236 each coordinate a divalent metal cation. Residues 234 to 236 (DVH) and 260 to 261 (HS) contribute to the 4-CDP-2-C-methyl-D-erythritol 2-phosphate site. Histidine 268 contacts a divalent metal cation. 4-CDP-2-C-methyl-D-erythritol 2-phosphate-binding positions include 282–284 (DIG), 358–361 (TTSE), phenylalanine 365, and arginine 368.

In the N-terminal section; belongs to the IspD/TarI cytidylyltransferase family. IspD subfamily. The protein in the C-terminal section; belongs to the IspF family. It depends on a divalent metal cation as a cofactor.

The catalysed reaction is 2-C-methyl-D-erythritol 4-phosphate + CTP + H(+) = 4-CDP-2-C-methyl-D-erythritol + diphosphate. The enzyme catalyses 4-CDP-2-C-methyl-D-erythritol 2-phosphate = 2-C-methyl-D-erythritol 2,4-cyclic diphosphate + CMP. The protein operates within isoprenoid biosynthesis; isopentenyl diphosphate biosynthesis via DXP pathway; isopentenyl diphosphate from 1-deoxy-D-xylulose 5-phosphate: step 2/6. Its pathway is isoprenoid biosynthesis; isopentenyl diphosphate biosynthesis via DXP pathway; isopentenyl diphosphate from 1-deoxy-D-xylulose 5-phosphate: step 4/6. Functionally, bifunctional enzyme that catalyzes the formation of 4-diphosphocytidyl-2-C-methyl-D-erythritol from CTP and 2-C-methyl-D-erythritol 4-phosphate (MEP) (IspD), and catalyzes the conversion of 4-diphosphocytidyl-2-C-methyl-D-erythritol 2-phosphate (CDP-ME2P) to 2-C-methyl-D-erythritol 2,4-cyclodiphosphate (ME-CPP) with a corresponding release of cytidine 5-monophosphate (CMP) (IspF). The polypeptide is Bifunctional enzyme IspD/IspF (Gluconobacter oxydans (strain 621H) (Gluconobacter suboxydans)).